Consider the following 383-residue polypeptide: MILSPADQERIETFWNYCLKHQYFNIGYPESADFDYSALFRFFKFSINNCGDWKDYSNYALNSFDFEKDVMAYFAEIFQIPFEESWGYVTNGGTEGNMFGCYLARELFPDSTLYYSKDTHYSVRKIAKLLQMKSCVIESLDNGEIDYDDLIHKIKTNKESHPIIFANIGTTMTGAIDDIEMIQERLAQIGIMRRDYYIHADAALSGMILPFVDHPQAFSFAHGIDSICVSGHKMIGSPIPCGIVVAKRQNVERISVDVDYISTRDQTISGSRNGHTVLLMWAAIRSQTNLQRRQRIQHCLKMAQYAVDRFQAVGIPAWRNPNSITVVFPCPSEHIWKKHYLATSGNMAHLITTAHHRDTRQIDSLIDDVIFDLQGASKRTVGF.

Histidine 120 serves as a coordination point for substrate. Position 233 is an N6-(pyridoxal phosphate)lysine (lysine 233).

Belongs to the group II decarboxylase family. In terms of assembly, homotetramer. The cofactor is pyridoxal 5'-phosphate.

The enzyme catalyses L-histidine + H(+) = histamine + CO2. The protein is Histidine decarboxylase of Acinetobacter baumannii (strain ACICU).